A 937-amino-acid chain; its full sequence is Protein translocase subunit SecA (937 aa).

ATP-binding positions include Gln-86, 104-108 (GEGKT), and Asp-493. The interval 868-889 (LERPSQPTKLAYSAPSEDGDAE) is disordered. 4 residues coordinate Zn(2+): Cys-911, Cys-913, Cys-922, and His-923. The segment at 915-937 (SGKKFKQCHGRPGGPTGLTARVS) is disordered.

This sequence belongs to the SecA family. As to quaternary structure, monomer and homodimer. Part of the essential Sec protein translocation apparatus which comprises SecA, SecYEG and auxiliary proteins SecDF. Other proteins may also be involved. Zn(2+) serves as cofactor.

The protein localises to the cell membrane. Its subcellular location is the cytoplasm. The catalysed reaction is ATP + H2O + cellular proteinSide 1 = ADP + phosphate + cellular proteinSide 2.. Its function is as follows. Part of the Sec protein translocase complex. Interacts with the SecYEG preprotein conducting channel. Has a central role in coupling the hydrolysis of ATP to the transfer of proteins into and across the cell membrane, serving as an ATP-driven molecular motor driving the stepwise translocation of polypeptide chains across the membrane. In Nocardioides sp. (strain ATCC BAA-499 / JS614), this protein is Protein translocase subunit SecA.